The primary structure comprises 480 residues: Glutamate--tRNA ligase (480 aa).

The 'HIGH' region signature appears at 21–31; the sequence is PSPTGYLHVGG. Positions 110, 112, 137, and 139 each coordinate Zn(2+). A 'KMSKS' region motif is present at residues 248-252; it reads KLSKR. Residue Lys-251 participates in ATP binding.

The protein belongs to the class-I aminoacyl-tRNA synthetase family. Glutamate--tRNA ligase type 1 subfamily. As to quaternary structure, monomer. The cofactor is Zn(2+).

The protein localises to the cytoplasm. It carries out the reaction tRNA(Glu) + L-glutamate + ATP = L-glutamyl-tRNA(Glu) + AMP + diphosphate. Functionally, catalyzes the attachment of glutamate to tRNA(Glu) in a two-step reaction: glutamate is first activated by ATP to form Glu-AMP and then transferred to the acceptor end of tRNA(Glu). This is Glutamate--tRNA ligase from Histophilus somni (strain 2336) (Haemophilus somnus).